A 296-amino-acid polypeptide reads, in one-letter code: Phosphoribosylaminoimidazole-succinocarboxamide synthase (296 aa).

It belongs to the SAICAR synthetase family.

It catalyses the reaction 5-amino-1-(5-phospho-D-ribosyl)imidazole-4-carboxylate + L-aspartate + ATP = (2S)-2-[5-amino-1-(5-phospho-beta-D-ribosyl)imidazole-4-carboxamido]succinate + ADP + phosphate + 2 H(+). Its pathway is purine metabolism; IMP biosynthesis via de novo pathway; 5-amino-1-(5-phospho-D-ribosyl)imidazole-4-carboxamide from 5-amino-1-(5-phospho-D-ribosyl)imidazole-4-carboxylate: step 1/2. The protein is Phosphoribosylaminoimidazole-succinocarboxamide synthase of Geobacter sp. (strain M21).